The sequence spans 811 residues: tRNA(Met) cytidine acetyltransferase TmcA (811 aa).

ATP is bound by residues Gln267 and Arg439. One can recognise an N-acetyltransferase domain in the interval 473–662 (KKEVYLEEPD…GEFTAIVLKP (190 aa)). Residues 589-591 (IAT), Glu629, and Arg636 each bind acetyl-CoA.

The protein belongs to the TmcA family.

The protein resides in the cytoplasm. The catalysed reaction is cytidine(34) in elongator tRNA(Met) + acetyl-CoA + ATP + H2O = N(4)-acetylcytidine(34) in elongator tRNA(Met) + ADP + phosphate + CoA + H(+). It carries out the reaction a cytidine in RNA + acetyl-CoA + ATP + H2O = an N(4)-acetylcytidine in RNA + ADP + phosphate + CoA + H(+). The enzyme catalyses a cytidine in tRNA + acetyl-CoA + ATP + H2O = an N(4)-acetylcytidine in tRNA + ADP + phosphate + CoA + H(+). It catalyses the reaction a cytidine in mRNA + acetyl-CoA + ATP + H2O = an N(4)-acetylcytidine in mRNA + ADP + phosphate + CoA + H(+). Its function is as follows. Catalyzes the formation of N(4)-acetylcytidine (ac(4)C) at the wobble position of tRNA(Met), by using acetyl-CoA as an acetyl donor and ATP (or GTP). In terms of biological role, catalyzes the formation of 267 N(4)-acetylcytidine (ac(4)C) sites in RNA, almost always on the middle C of a CCG motif. Modifications are found in rRNA, ncRNA, mRNA and tRNA. More acetylation is observed at 95 than at 75 or 85 degrees Celsius. The sequence is that of tRNA(Met) cytidine acetyltransferase TmcA from Thermococcus sp. (strain AM4).